Here is a 320-residue protein sequence, read N- to C-terminus: Mechanosensory protein 3 (320 aa).

LIM zinc-binding domains lie at 29-79 and 89-145; these read CNCC…CSQH and CAGC…CMTH. The homeobox DNA-binding region spans 216–275; it reads RRGPRTTIKQNQLDVLNEMFSNTPKPSKHARAKKALETGLSMRVIQVWFQNRRSKERRLK.

Its subcellular location is the nucleus. In terms of biological role, specifies differentiation of the set of six touch receptor neurons. Binds cooperatively as a heterodimer with unc-86 to sites in the mec-3 gene promoter. This chain is Mechanosensory protein 3 (mec-3), found in Caenorhabditis remanei (Caenorhabditis vulgaris).